The sequence spans 240 residues: Eukaryotic translation initiation factor 4E-3 (240 aa).

Residues 1-51 form a disordered region; sequence MVVTDSPVSGIMADQNIDPNTTTSPSPKEKHVSAIKAISGDEKAPSKEKKN. A compositionally biased stretch (polar residues) spans 17–26; the sequence is IDPNTTTSPS. Residues 39-51 are compositionally biased toward basic and acidic residues; sequence SGDEKAPSKEKKN. EIF4G-binding regions lie at residues 65-68 and 75-111; these read HCFQ and FDNPSSKSNQVIWGSSLRSLYTFGTIEEFWSLYNNIH. Residues 83–88, K115, and 133–134 each bind mRNA; these read NQVIWG and WE. An intrachain disulfide couples C138 to C176. The segment at 159 to 168 is EIF4G-binding; the sequence is NTLLALVGEQ. MRNA is bound by residues 183-188 and 228-232; these read RARGDR and KTLDR.

The protein belongs to the eukaryotic initiation factor 4E family. As to quaternary structure, EIF4F is a multi-subunit complex, the composition of which varies with external and internal environmental conditions. It is composed of at least EIF4A, EIF4E and EIF4G. EIF4E is also known to interact with other partners. In higher plants two isoforms of EIF4F have been identified, named isoform EIF4F and isoform EIF(iso)4F. Isoform EIF4F has subunits p220 and p26, whereas isoform EIF(iso)4F has subunits p82 and p28. Post-translationally, according to the redox status, the Cys-138-Cys-176 disulfide bridge may have a role in regulating protein function by affecting its ability to bind capped mRNA.

The protein resides in the nucleus. The protein localises to the cytoplasm. Component of the protein complex eIF4F, which is involved in the recognition of the mRNA cap, ATP-dependent unwinding of 5'-terminal secondary structure and recruitment of mRNA to the ribosome. Recognizes and binds the 7-methylguanosine-containing mRNA cap during an early step in the initiation of protein synthesis and facilitates ribosome binding by inducing the unwinding of the mRNAs secondary structures. In Arabidopsis thaliana (Mouse-ear cress), this protein is Eukaryotic translation initiation factor 4E-3.